Here is a 535-residue protein sequence, read N- to C-terminus: BAR/IMD domain-containing adapter protein 2 (535 aa).

The IMD domain occupies 1–250 (MSLSRSEEMH…VQLMQQMANS (250 aa)). A coiled-coil region spans residues 88 to 153 (NQLEETLKSF…LRKKSQGSKN (66 aa)). Phosphoserine occurs at positions 262, 324, 326, and 337. Residues 299 to 370 (VMNGVAGPDS…TLPRSSSMAA (72 aa)) form a disordered region. Over residues 321–335 (QPKSLSPPQSQSKLS) the composition is skewed to low complexity. The residue at position 341 (Thr-341) is a Phosphothreonine. Residue Ser-347 is modified to Phosphoserine. Positions 349–368 (TPKNSYATTENKTLPRSSSM) are enriched in polar residues. Residue Thr-361 is modified to Phosphothreonine. A phosphoserine mark is found at Ser-367, Ser-385, Ser-396, and Ser-455. The 64-residue stretch at 375–438 (NGRMRVKAIF…PFSYTRVLDS (64 aa)) folds into the SH3 domain. The tract at residues 445-477 (HMSLQQGKSSSTGNLLDKDDLALPPPDYGTSSR) is disordered. Over residues 447–458 (SLQQGKSSSTGN) the composition is skewed to polar residues.

In terms of assembly, homodimer. Interacts with CDC42 and RAC1 that have been activated by GTP binding. Binds DIAPH1. Interacts with ATN1, ADGRB1, SHANK1, SHANK2, SHANK3, TIAM1, WASF1 and WASF2. Interacts with ENAH after recruitment of CDC42. Interacts with EPS8. In terms of processing, phosphorylated on tyrosine residues by INSR in response to insulin treatment. In terms of tissue distribution, detected in liver, brain, olfactory bulb, brain cortex, caudate putamen, hypothalamus and cerebellum.

The protein localises to the cytoplasm. Its subcellular location is the membrane. The protein resides in the cell projection. It localises to the filopodium. It is found in the ruffle. The protein localises to the cytoskeleton. Adapter protein that links membrane-bound small G-proteins to cytoplasmic effector proteins. Necessary for CDC42-mediated reorganization of the actin cytoskeleton and for RAC1-mediated membrane ruffling. Involved in the regulation of the actin cytoskeleton by WASF family members and the Arp2/3 complex. Plays a role in neurite growth. Acts syngeristically with ENAH to promote filipodia formation. Plays a role in the reorganization of the actin cytoskeleton in response to bacterial infection. Participates in actin bundling when associated with EPS8, promoting filopodial protrusions. The chain is BAR/IMD domain-containing adapter protein 2 (Baiap2) from Mus musculus (Mouse).